The chain runs to 156 residues: Cytochrome c-type biogenesis protein CcmE 1 (156 aa).

Topologically, residues 1 to 8 are cytoplasmic; that stretch reads MNATRKQR. Residues 9–29 traverse the membrane as a helical; Signal-anchor for type II membrane protein segment; it reads LWLVIGVLTAAALAVTLIALA. The Periplasmic portion of the chain corresponds to 30 to 156; the sequence is LQRNMSYLFT…AAAAPLSGVR (127 aa). Residues His123 and Tyr127 each coordinate heme.

Belongs to the CcmE/CycJ family.

Its subcellular location is the cell inner membrane. Heme chaperone required for the biogenesis of c-type cytochromes. Transiently binds heme delivered by CcmC and transfers the heme to apo-cytochromes in a process facilitated by CcmF and CcmH. The sequence is that of Cytochrome c-type biogenesis protein CcmE 1 from Xanthomonas campestris pv. campestris (strain 8004).